Consider the following 539-residue polypeptide: Eukaryotic translation initiation factor 3 subunit L (539 aa).

The PCI domain maps to 306 to 514 (TFSDILLYIQ…IHIADTKVSH (209 aa)).

It belongs to the eIF-3 subunit L family. As to quaternary structure, component of the eukaryotic translation initiation factor 3 (eIF-3) complex. The eIF-3 complex interacts with pix.

It localises to the cytoplasm. In terms of biological role, component of the eukaryotic translation initiation factor 3 (eIF-3) complex, which is involved in protein synthesis of a specialized repertoire of mRNAs and, together with other initiation factors, stimulates binding of mRNA and methionyl-tRNAi to the 40S ribosome. The eIF-3 complex specifically targets and initiates translation of a subset of mRNAs involved in cell proliferation. This Drosophila sechellia (Fruit fly) protein is Eukaryotic translation initiation factor 3 subunit L.